Consider the following 227-residue polypeptide: Thymidylate synthase (227 aa).

89–90 (RR) lines the dUMP pocket. Cysteine 109 functions as the Nucleophile in the catalytic mechanism. DUMP is bound by residues 129–132 (RSND), asparagine 140, and 170–172 (HVY). Aspartate 132 contacts (6R)-5,10-methylene-5,6,7,8-tetrahydrofolate.

Belongs to the thymidylate synthase family. Bacterial-type ThyA subfamily. Homodimer.

It is found in the cytoplasm. The enzyme catalyses dUMP + (6R)-5,10-methylene-5,6,7,8-tetrahydrofolate = 7,8-dihydrofolate + dTMP. Its pathway is pyrimidine metabolism; dTTP biosynthesis. Functionally, catalyzes the reductive methylation of 2'-deoxyuridine-5'-monophosphate (dUMP) to 2'-deoxythymidine-5'-monophosphate (dTMP) while utilizing 5,10-methylenetetrahydrofolate (mTHF) as the methyl donor and reductant in the reaction, yielding dihydrofolate (DHF) as a by-product. This enzymatic reaction provides an intracellular de novo source of dTMP, an essential precursor for DNA biosynthesis. This chain is Thymidylate synthase, found in Bacillus atrophaeus.